A 572-amino-acid polypeptide reads, in one-letter code: Proline--tRNA ligase (572 aa).

It belongs to the class-II aminoacyl-tRNA synthetase family. ProS type 1 subfamily. As to quaternary structure, homodimer.

Its subcellular location is the cytoplasm. The catalysed reaction is tRNA(Pro) + L-proline + ATP = L-prolyl-tRNA(Pro) + AMP + diphosphate. In terms of biological role, catalyzes the attachment of proline to tRNA(Pro) in a two-step reaction: proline is first activated by ATP to form Pro-AMP and then transferred to the acceptor end of tRNA(Pro). As ProRS can inadvertently accommodate and process non-cognate amino acids such as alanine and cysteine, to avoid such errors it has two additional distinct editing activities against alanine. One activity is designated as 'pretransfer' editing and involves the tRNA(Pro)-independent hydrolysis of activated Ala-AMP. The other activity is designated 'posttransfer' editing and involves deacylation of mischarged Ala-tRNA(Pro). The misacylated Cys-tRNA(Pro) is not edited by ProRS. The chain is Proline--tRNA ligase from Shigella dysenteriae serotype 1 (strain Sd197).